The chain runs to 137 residues: ATP synthase epsilon chain (137 aa).

Belongs to the ATPase epsilon chain family. As to quaternary structure, F-type ATPases have 2 components, CF(1) - the catalytic core - and CF(0) - the membrane proton channel. CF(1) has five subunits: alpha(3), beta(3), gamma(1), delta(1), epsilon(1). CF(0) has three main subunits: a, b and c.

The protein localises to the cell membrane. Functionally, produces ATP from ADP in the presence of a proton gradient across the membrane. The protein is ATP synthase epsilon chain of Caldicellulosiruptor bescii (strain ATCC BAA-1888 / DSM 6725 / KCTC 15123 / Z-1320) (Anaerocellum thermophilum).